The following is a 193-amino-acid chain: MQITISEAAQAHFRRLLDQQEEGTNIRIFVVNPGSPNAECGVSYCPKNAVETTDHEIKYSEFSAFIDEVSFPFLEDAEIDYITEEMGSQLTLKAPNAKMRKVADDAPLIERVEYAIQTQINPQLAGHGGHITLIEITKDGKAILQFGGGCNGCSMVDVTLKDGIEKQLLAMFADELTGVKDVTEHQRGEHSYY.

The [4Fe-4S] cluster site is built by Cys-150 and Cys-153.

It belongs to the NfuA family. As to quaternary structure, homodimer. The cofactor is [4Fe-4S] cluster.

In terms of biological role, involved in iron-sulfur cluster biogenesis. Binds a 4Fe-4S cluster, can transfer this cluster to apoproteins, and thereby intervenes in the maturation of Fe/S proteins. Could also act as a scaffold/chaperone for damaged Fe/S proteins. The sequence is that of Fe/S biogenesis protein NfuA from Histophilus somni (strain 129Pt) (Haemophilus somnus).